Consider the following 324-residue polypeptide: Beta-ketoacyl-[acyl-carrier-protein] synthase III (324 aa).

Active-site residues include Cys-112 and His-251. The ACP-binding stretch occupies residues 252 to 256; it reads QANLR. The active site involves Asn-281.

Belongs to the thiolase-like superfamily. FabH family. As to quaternary structure, homodimer.

The protein localises to the cytoplasm. It carries out the reaction malonyl-[ACP] + acetyl-CoA + H(+) = 3-oxobutanoyl-[ACP] + CO2 + CoA. Its pathway is lipid metabolism; fatty acid biosynthesis. Catalyzes the condensation reaction of fatty acid synthesis by the addition to an acyl acceptor of two carbons from malonyl-ACP. Catalyzes the first condensation reaction which initiates fatty acid synthesis and may therefore play a role in governing the total rate of fatty acid production. Possesses both acetoacetyl-ACP synthase and acetyl transacylase activities. Its substrate specificity determines the biosynthesis of branched-chain and/or straight-chain of fatty acids. In Clostridium perfringens (strain 13 / Type A), this protein is Beta-ketoacyl-[acyl-carrier-protein] synthase III.